Consider the following 737-residue polypeptide: DNA polymerase iota (737 aa).

Residues 17-231 (IIHLDMDYFY…GDLKRVTGIG (215 aa)) enclose the UmuC domain. D21 serves as a coordination point for Mg(2+). 2 residues coordinate a 2'-deoxyribonucleoside 5'-triphosphate: Y26 and R58. D113 serves as a coordination point for Mg(2+). E114 is a catalytic residue. DNA-binding stretches follow at residues 212 to 277 (TYAE…FGRD) and 288 to 413 (KTIG…SKFQ). Disordered regions lie at residues 443 to 464 (TSLT…RSSP), 482 to 515 (SPVP…SPKK), 557 to 581 (DSEK…RFRT), and 607 to 643 (LSSN…PSPT). Residues 491 to 502 (GSESAATNSDFS) show a composition bias toward polar residues. 3 stretches are compositionally biased toward low complexity: residues 563–577 (PMST…APAP), 607–618 (LSSNASSTASSP), and 632–643 (PSTTTLPFPSPT). Residues 669-686 (VDAEVFKELPVELQTELI) carry the Ubiquitin-binding (UBM) motif.

The protein belongs to the DNA polymerase type-Y family. Requires Mg(2+) as cofactor. Mn(2+) is required as a cofactor.

The protein resides in the nucleus. The enzyme catalyses DNA(n) + a 2'-deoxyribonucleoside 5'-triphosphate = DNA(n+1) + diphosphate. Its function is as follows. Error-prone DNA polymerase specifically involved in DNA repair. Plays an important role in translesion synthesis, where the normal high-fidelity DNA polymerases cannot proceed and DNA synthesis stalls. Favors Hoogsteen base-pairing in the active site. Inserts the correct base with higher fidelity opposite an adenosine template. Exhibits low fidelity and efficiency opposite a thymidine template, where it will preferentially insert guanosine. Forms a Schiff base with 5'-deoxyribose phosphate at abasic sites, but may not have lyase activity. The chain is DNA polymerase iota from Drosophila melanogaster (Fruit fly).